Here is a 223-residue protein sequence, read N- to C-terminus: Cytochrome c biogenesis ATP-binding export protein CcmA (223 aa).

An ABC transporter domain is found at leucine 20 to alanine 222. Glycine 52–threonine 59 provides a ligand contact to ATP.

The protein belongs to the ABC transporter superfamily. CcmA exporter (TC 3.A.1.107) family. As to quaternary structure, the complex is composed of two ATP-binding proteins (CcmA) and two transmembrane proteins (CcmB).

The protein localises to the cell inner membrane. The catalysed reaction is heme b(in) + ATP + H2O = heme b(out) + ADP + phosphate + H(+). In terms of biological role, part of the ABC transporter complex CcmAB involved in the biogenesis of c-type cytochromes; once thought to export heme, this seems not to be the case, but its exact role is uncertain. Responsible for energy coupling to the transport system. The chain is Cytochrome c biogenesis ATP-binding export protein CcmA from Xylella fastidiosa (strain 9a5c).